The sequence spans 54 residues: Ovomucoid (54 aa).

A Kazal-like domain is found at 4–54; sequence VDCSDYPKPACLLEYMPLCGSDNKTYDNKCSFCNAVVDSNGTLSLSHFGKC. Intrachain disulfides connect C6-C36, C14-C33, and C22-C54. The N-linked (GlcNAc...) asparagine glycan is linked to N43.

The protein resides in the secreted. The sequence is that of Ovomucoid from Opisthocomus hoazin (Hoatzin).